The following is a 207-amino-acid chain: Oligoribonuclease (207 aa).

Residues 20 to 183 (LVWLDMEMTG…ADIHESIDEL (164 aa)) enclose the Exonuclease domain. The active site involves Y141.

This sequence belongs to the oligoribonuclease family.

It is found in the cytoplasm. 3'-to-5' exoribonuclease specific for small oligoribonucleotides. This is Oligoribonuclease from Paraburkholderia xenovorans (strain LB400).